We begin with the raw amino-acid sequence, 274 residues long: GATA transcription factor 1 (274 aa).

2 disordered regions span residues methionine 1–leucine 39 and serine 102–alanine 132. Residues lysine 152–arginine 159 carry the Nuclear localization signal motif. A GATA-type zinc finger spans residues leucine 190–alanine 244.

Belongs to the type IV zinc-finger family. Class A subfamily. Mostly expressed in roots. Also expressed in stems, flowers and leaves.

Its subcellular location is the nucleus. In terms of biological role, transcriptional activator that specifically binds 5'-GATA-3' or 5'-GAT-3' motifs within gene promoters. May be involved in the regulation of some light-responsive genes. The protein is GATA transcription factor 1 (GATA1) of Arabidopsis thaliana (Mouse-ear cress).